A 796-amino-acid polypeptide reads, in one-letter code: Fibroblast growth factor receptor 3 (796 aa).

The first 19 residues, 1–19 (MLVWLCGLCLVTLAGGRSA), serve as a signal peptide directing secretion. Topologically, residues 20 to 358 (ARLPLTEGRP…AEPVPDVDTS (339 aa)) are extracellular. In terms of domain architecture, Ig-like C2-type 1 spans 21–119 (RLPLTEGRPT…VLRNVTVRVT (99 aa)). A disulfide bond links C56 and C102. N91 and N113 each carry an N-linked (GlcNAc...) asparagine glycan. The interval 117–142 (RVTDSPSSGDDEDDDEESESANAPKF) is disordered. Residues 125–135 (GDDEDDDEESE) show a composition bias toward acidic residues. 2 consecutive Ig-like C2-type domains span residues 140–233 (PKFT…YTLD) and 239–344 (PHRP…AWLT). An intrachain disulfide couples C165 to C217. 5 N-linked (GlcNAc...) asparagine glycosylation sites follow: N214, N251, N283, N304, and N317. A disulfide bond links C264 and C328. Residues 359-379 (VSILAAAGCVAVVILVVIIIF) form a helical membrane-spanning segment. Over 380–796 (TYKMKMPSKK…HQQYNGVIRT (417 aa)) the chain is Cytoplasmic. One can recognise a Protein kinase domain in the interval 457 to 746 (LTLGKPLGEG…LTVTSTDEYL (290 aa)). ATP-binding positions include 463–471 (LGEGCFGQV) and K493. D602 acts as the Proton acceptor in catalysis. 4 positions are modified to phosphotyrosine; by autocatalysis: Y632, Y633, Y709, and Y745.

It belongs to the protein kinase superfamily. Tyr protein kinase family. Fibroblast growth factor receptor subfamily. As to quaternary structure, monomer. Homodimer after ligand binding. In terms of processing, autophosphorylated. Binding of FGF family members together with heparan sulfate proteoglycan or heparin promotes receptor dimerization and autophosphorylation on tyrosine residues. Autophosphorylation occurs in trans between the two FGFR molecules present in the dimer. As to expression, undetectable in the adult skeletal muscle. Low levels of expression were detected in the liver, lung and kidney. Medium levels of expression were detected in the heart, spleen, intestine and eye. Highest expression is observed in the testis.

The protein resides in the cell membrane. It carries out the reaction L-tyrosyl-[protein] + ATP = O-phospho-L-tyrosyl-[protein] + ADP + H(+). Present in an inactive conformation in the absence of bound ligand. Ligand binding leads to dimerization and activation by autophosphorylation on tyrosine residues. In terms of biological role, tyrosine-protein kinase that acts as a cell-surface receptor for fibroblast growth factors and plays an essential role in the regulation of cell proliferation, differentiation and apoptosis. Plays an essential role in the regulation of chondrocyte differentiation, proliferation and apoptosis, and is required for normal skeleton development. Regulates both osteogenesis and postnatal bone mineralization by osteoblasts. Promotes apoptosis in chondrocytes, but can also promote cancer cell proliferation. Phosphorylates PLCG1, CBL and FRS2. Ligand binding leads to the activation of several signaling cascades. Activation of PLCG1 leads to the production of the cellular signaling molecules diacylglycerol and inositol 1,4,5-trisphosphate. Phosphorylation of FRS2 triggers recruitment of GRB2, GAB1, PIK3R1 and SOS1, and mediates activation of RAS, MAPK1/ERK2, MAPK3/ERK1 and the MAP kinase signaling pathway, as well as of the AKT1 signaling pathway. The protein is Fibroblast growth factor receptor 3 (FGFR3) of Pleurodeles waltl (Iberian ribbed newt).